Reading from the N-terminus, the 567-residue chain is Urease subunit alpha (567 aa).

Residues 129 to 567 (GGIDAHIHFI…LPLAQRYFLF (439 aa)) form the Urease domain. The Ni(2+) site is built by histidine 134, histidine 136, and lysine 217. Position 217 is an N6-carboxylysine (lysine 217). Histidine 219 is a binding site for substrate. Residues histidine 246 and histidine 272 each contribute to the Ni(2+) site. Histidine 320 acts as the Proton donor in catalysis. Aspartate 360 lines the Ni(2+) pocket.

The protein belongs to the metallo-dependent hydrolases superfamily. Urease alpha subunit family. Heterotrimer of UreA (gamma), UreB (beta) and UreC (alpha) subunits. Three heterotrimers associate to form the active enzyme. It depends on Ni cation as a cofactor. Post-translationally, carboxylation allows a single lysine to coordinate two nickel ions.

Its subcellular location is the cytoplasm. It carries out the reaction urea + 2 H2O + H(+) = hydrogencarbonate + 2 NH4(+). Its pathway is nitrogen metabolism; urea degradation; CO(2) and NH(3) from urea (urease route): step 1/1. The sequence is that of Urease subunit alpha from Hahella chejuensis (strain KCTC 2396).